A 166-amino-acid chain; its full sequence is MKKVYHYIIHYVRTYLLLELLAGLWLTVKYFFRKKITVQFPEEQTPLSPRFRGLLALRRYPNGEERCIACKLCEAVCPALAITIESEQRDDGSRRTTRYDIDMFKCINCGLCEESCPVDSIVVTPIHHYHISERGQNIMTKEKLLAVGDLMESQLAADRAADEKYR.

2 consecutive 4Fe-4S ferredoxin-type domains span residues 57 to 87 (LRRY…IESE) and 97 to 126 (TRYD…VTPI). Cys-67, Cys-70, Cys-73, Cys-77, Cys-106, Cys-109, Cys-112, and Cys-116 together coordinate [4Fe-4S] cluster.

It belongs to the complex I 23 kDa subunit family. In terms of assembly, NDH-1 is composed of 14 different subunits. Subunits NuoA, H, J, K, L, M, N constitute the membrane sector of the complex. Requires [4Fe-4S] cluster as cofactor.

It is found in the cell inner membrane. It carries out the reaction a quinone + NADH + 5 H(+)(in) = a quinol + NAD(+) + 4 H(+)(out). In terms of biological role, NDH-1 shuttles electrons from NADH, via FMN and iron-sulfur (Fe-S) centers, to quinones in the respiratory chain. The immediate electron acceptor for the enzyme in this species is believed to be ubiquinone. Couples the redox reaction to proton translocation (for every two electrons transferred, four hydrogen ions are translocated across the cytoplasmic membrane), and thus conserves the redox energy in a proton gradient. The chain is NADH-quinone oxidoreductase subunit I from Legionella pneumophila (strain Lens).